Here is a 691-residue protein sequence, read N- to C-terminus: MAPFPEEVDVFTAPHWRTKQLVGLYCDKLSKTNFSNNNDFRALLQSLYATFKEFKMHEQIENEYIIGLLQQRSQTIYNVHSDNKLSEMLSLFEKGLKNVKNEYEQLNYAKQLKERLEAFTRDFLPHMKEEEEVFQPMLMEYFTYEELKDIKKKVIAQHCSQKDTAELLRGLSLWNHAEERQKFFKYSVDEKSDKEAEVSEHSTGITHLPPEVMLSIFSYLNPQELCRCSQVSMKWSQLTKTGSLWKHLYPVHWARGDWYSGPATGLDTEPDEEWVKNRKDESRAFHEWDEDADIDESEESVEESIAISIAQMEKRLLHGLIHNVLPYVGTSVKTLVLAYSSAVSSKMVRQILELCPNLEHLDLTQTDISDSAFDSWSWLGCCQSLRHLDLSGCEKITDVALEKISRALGILTSHQSGFLKTSTSKITSTTWKNKDVTMQSTKQYAYLHDLTNKGIGEEIDNEHPWTKPVSSENFTSPYLWMLDAEDLADIEDTVEWRHRNVESLCVVETASNFSCSTSGCFSKDIVGLRTSVCWQQHCASPAFAYCGHSFCCTGTALRTMSALPESSAMCRKASRTRLPRGKDLIYFGSEKSDQETGRVLLFLSLSGCYQITDHGLRVLTLGGGLPYLEHLNLSGCLTITGAGLQDLVSACPSLNDEYFYYCDNINGPHADTASGCQNLQCGFRACCRSGE.

The tract at residues 1–159 (MAPFPEEVDV…IKKKVIAQHC (159 aa)) is hemerythrin-like. Fe(3+)-binding residues include H15, H57, E58, E61, H80, H126, and E130. Positions 202-248 (STGITHLPPEVMLSIFSYLNPQELCRCSQVSMKWSQLTKTGSLWKHL) constitute an F-box domain. 7 LRR repeats span residues 340–364 (SSAV…LDLT), 365–392 (QTDI…DLSG), 393–418 (CEKI…QSGF), 479–508 (LWML…CVVE), 576–607 (TRLP…SLSG), 608–635 (CYQI…NLSG), and 636–661 (CLTI…YFYY). 4 residues coordinate [2Fe-2S] cluster: C662, C676, C686, and C687.

Part of a SCF (SKP1-cullin-F-box) protein ligase complex. Interacts with ACO1/IRP1, IREB2/IRP2; the interaction depends on the [2Fe-2S] cluster. Interacts with DCTN1/p150-glued. It depends on [2Fe-2S] cluster as a cofactor. In terms of processing, polybiquitinated upon iron and oxygen depletion, leading to its degradation by the proteasome. Ubiquitination is regulated by the hemerythrin-like region that acts as an oxygen and iron sensor. Undergoes constitutive ubiquitin-dependent degradation at the steady state by HERC2.

The protein resides in the cytoplasm. It localises to the perinuclear region. The protein localises to the nucleus. The protein operates within protein modification; protein ubiquitination. With respect to regulation, an iron-sulfur cluster promotes IRP2 polyubiquitination and degradation in response to both iron and oxygen concentrations. Component of some SCF (SKP1-cullin-F-box) protein ligase complex that plays a central role in iron homeostasis by promoting the ubiquitination and subsequent degradation of IREB2/IRP2. The C-terminal domain of FBXL5 contains a redox-sensitive [2Fe-2S] cluster that, upon oxidation, promotes binding to IRP2 to effect its oxygen-dependent degradation. Under iron deficiency conditions, the N-terminal hemerythrin-like (Hr) region, which contains a diiron metal center, cannot bind iron and undergoes conformational changes that destabilize the FBXL5 protein and cause its ubiquitination and degradation. When intracellular iron levels start rising, the Hr region is stabilized. Additional increases in iron levels facilitate the assembly and incorporation of a redox active [2Fe-2S] cluster in the C-terminal domain. Only when oxygen level is high enough to maintain the cluster in its oxidized state can FBXL5 recruit IRP2 as a substrate for polyubiquination and degradation. Promotes ubiquitination and subsequent degradation of the dynactin complex component DCTN1. Within the nucleus, promotes the ubiquitination of SNAI1; preventing its interaction with DNA and promoting its degradation. Negatively regulates DNA damage response by mediating the ubiquitin-proteasome degradation of the DNA repair protein NABP2. This Pongo abelii (Sumatran orangutan) protein is F-box/LRR-repeat protein 5 (FBXL5).